We begin with the raw amino-acid sequence, 535 residues long: Hrp65 protein (535 aa).

Residues 1–80 (MDVKAEAPNG…GMGPRGPMKN (80 aa)) are disordered. Low complexity-rich tracts occupy residues 27 to 42 (ENMN…QNNN) and 50 to 64 (NKRN…FQNR). The segment covering 65-74 (GGKGGPGMGP) has biased composition (gly residues). 2 RRM domains span residues 113-185 (NRLY…FAPN) and 187-268 (TTIR…TFDH). Disordered regions lie at residues 346 to 411 (EHET…RRQQ) and 429 to 535 (QEMN…RRRY). Residues 434-459 (QGGGGGGGNGGNGNNQGGGGNQGGGR) show a composition bias toward gly residues. Residues 486–502 (GNQYQGNQHYQGNQDQG) show a composition bias toward low complexity. A compositionally biased stretch (basic and acidic residues) spans 521–535 (DRGHRDDFQNKRRRY).

Its subcellular location is the cytoplasm. It localises to the cytoskeleton. It is found in the nucleus. Component of nuclear connecting fibers associated with the transport of ribonucleoprotein particles from either the chromosome to the nuclear pore complex or their transient retention in the nucleoplasm. The polypeptide is Hrp65 protein (HRP65) (Chironomus tentans (Midge)).